Here is a 201-residue protein sequence, read N- to C-terminus: MKYILIHDLPYQEEEIGITEFYDENDLDTEADIYDRETFGILLGEYVTGLYLLDDTFIEPVLDNINIPNNVYSTNIFAIHYVAKHILGIKDLDKRLKSGDIELVRELGEVTIGGKEKYFYSFATKYCSHHNPIAFPIYDSYVEQVLLYFNKVDKFSAFKRKDLKNYRKFKEVLIDFQRFNLKELDLYLWLLGKEIFPKSKN.

This is an uncharacterized protein from Haemophilus influenzae (strain ATCC 51907 / DSM 11121 / KW20 / Rd).